A 361-amino-acid chain; its full sequence is D-alanine--D-alanine ligase (361 aa).

One can recognise an ATP-grasp domain in the interval 134–344; it reads KILAQRAGVP…YTDLITKLID (211 aa). 169–224 serves as a coordination point for ATP; sequence ASQLGSDLFVKPSNQGSSVGVSHVTNEKEYKVALAEAFKYDDKVLVEETVHGTEVE. Mg(2+) contacts are provided by aspartate 297, glutamate 311, and asparagine 313.

This sequence belongs to the D-alanine--D-alanine ligase family. Requires Mg(2+) as cofactor. The cofactor is Mn(2+).

Its subcellular location is the cytoplasm. The catalysed reaction is 2 D-alanine + ATP = D-alanyl-D-alanine + ADP + phosphate + H(+). It participates in cell wall biogenesis; peptidoglycan biosynthesis. Its function is as follows. Cell wall formation. The protein is D-alanine--D-alanine ligase of Lactobacillus gasseri (strain ATCC 33323 / DSM 20243 / BCRC 14619 / CIP 102991 / JCM 1131 / KCTC 3163 / NCIMB 11718 / NCTC 13722 / AM63).